The chain runs to 643 residues: Protein ecdysoneless homolog (643 aa).

2 disordered regions span residues 428–458 (EFYN…NNFD) and 501–600 (IESM…FTPV). Positions 446–456 (AGSSSDANMNN) are enriched in polar residues. Acidic residues predominate over residues 528–543 (MDFDDVEDDSEGEESN). Polar residues predominate over residues 564–580 (NSTLEKSFENVNQQHSS). Positions 581–592 (KQNEESSKTRDE) are enriched in basic and acidic residues.

Belongs to the ECD family.

The protein is Protein ecdysoneless homolog of Arabidopsis thaliana (Mouse-ear cress).